The chain runs to 290 residues: Lipoyl synthase (290 aa).

[4Fe-4S] cluster is bound by residues Cys-36, Cys-41, Cys-47, Cys-62, Cys-66, Cys-69, and Ser-275. Residues 48-264 enclose the Radical SAM core domain; sequence FSKKTATFMI…KEEALKIGFS (217 aa).

Belongs to the radical SAM superfamily. Lipoyl synthase family. It depends on [4Fe-4S] cluster as a cofactor.

The protein localises to the cytoplasm. The enzyme catalyses [[Fe-S] cluster scaffold protein carrying a second [4Fe-4S](2+) cluster] + N(6)-octanoyl-L-lysyl-[protein] + 2 oxidized [2Fe-2S]-[ferredoxin] + 2 S-adenosyl-L-methionine + 4 H(+) = [[Fe-S] cluster scaffold protein] + N(6)-[(R)-dihydrolipoyl]-L-lysyl-[protein] + 4 Fe(3+) + 2 hydrogen sulfide + 2 5'-deoxyadenosine + 2 L-methionine + 2 reduced [2Fe-2S]-[ferredoxin]. Its pathway is protein modification; protein lipoylation via endogenous pathway; protein N(6)-(lipoyl)lysine from octanoyl-[acyl-carrier-protein]: step 2/2. In terms of biological role, catalyzes the radical-mediated insertion of two sulfur atoms into the C-6 and C-8 positions of the octanoyl moiety bound to the lipoyl domains of lipoate-dependent enzymes, thereby converting the octanoylated domains into lipoylated derivatives. The sequence is that of Lipoyl synthase from Alkaliphilus metalliredigens (strain QYMF).